Reading from the N-terminus, the 465-residue chain is UDP-N-acetylmuramate--L-alanine ligase (465 aa).

An ATP-binding site is contributed by glycine 125–threonine 131.

This sequence belongs to the MurCDEF family.

The protein resides in the cytoplasm. It catalyses the reaction UDP-N-acetyl-alpha-D-muramate + L-alanine + ATP = UDP-N-acetyl-alpha-D-muramoyl-L-alanine + ADP + phosphate + H(+). The protein operates within cell wall biogenesis; peptidoglycan biosynthesis. Functionally, cell wall formation. The protein is UDP-N-acetylmuramate--L-alanine ligase of Deinococcus geothermalis (strain DSM 11300 / CIP 105573 / AG-3a).